Reading from the N-terminus, the 51-residue chain is Large ribosomal subunit protein eL39 (51 aa).

The protein belongs to the eukaryotic ribosomal protein eL39 family.

In Saccharolobus islandicus (strain L.S.2.15 / Lassen #1) (Sulfolobus islandicus), this protein is Large ribosomal subunit protein eL39.